The following is a 77-amino-acid chain: Bradykinin-potentiating peptide (77 aa).

Residues 1–22 (MNKKTLLVIFIVTLLIADEVNS) form the signal peptide. A propeptide spanning residues 74–77 (RRRR) is cleaved from the precursor.

This sequence belongs to the non-disulfide-bridged peptide (NDBP) superfamily. Long chain multifunctional peptide (group 2) family. Expressed by the venom gland.

It is found in the secreted. Functionally, antimicrobial peptide. May also inhibit angiotensin-converting enzyme (ACE) and potentiate bradykinin (BK). The chain is Bradykinin-potentiating peptide from Tityus discrepans (Venezuelan scorpion).